Reading from the N-terminus, the 376-residue chain is MTIAPDPVDLAARLIACKSVTPSDDGAMNIMADALKSAGFTVHLLTKGQAPDGPVTNLIAIRGEGYPHLAYAGHSDVVPAGQGWSSDPFTPTIKDGYLVGRGAVDMKSSVAAFIAAASRYTEHKGTLSLLITGDEEGPATFGTPAIIEWLNEQSIKPDYCLVGEPTSVERLGDTVKNGRRGSVNMWIEVEGIQGHVAYPDRACNPIPVLARIISDLESWVLDKGDQWFQPSNLEVTSIECDNKATNVIPALAKAQLNIRFNALHKGAELVDSLKKRVAAIDPKARVKAAISGEAFVTEEGVLTDTISAAIAKNTGITPSLSTSGGTSDARFLTKLCPVVEFGLVNATMHKVDEKASVEDIRQLSRIDEDIIKSFLG.

Histidine 74 is a binding site for Zn(2+). Residue aspartate 76 is part of the active site. Aspartate 105 provides a ligand contact to Zn(2+). Catalysis depends on glutamate 135, which acts as the Proton acceptor. Zn(2+)-binding residues include glutamate 136, glutamate 164, and histidine 349.

The protein belongs to the peptidase M20A family. DapE subfamily. As to quaternary structure, homodimer. Requires Zn(2+) as cofactor. It depends on Co(2+) as a cofactor.

It carries out the reaction N-succinyl-(2S,6S)-2,6-diaminopimelate + H2O = (2S,6S)-2,6-diaminopimelate + succinate. The protein operates within amino-acid biosynthesis; L-lysine biosynthesis via DAP pathway; LL-2,6-diaminopimelate from (S)-tetrahydrodipicolinate (succinylase route): step 3/3. In terms of biological role, catalyzes the hydrolysis of N-succinyl-L,L-diaminopimelic acid (SDAP), forming succinate and LL-2,6-diaminopimelate (DAP), an intermediate involved in the bacterial biosynthesis of lysine and meso-diaminopimelic acid, an essential component of bacterial cell walls. The chain is Succinyl-diaminopimelate desuccinylase from Zymomonas mobilis subsp. mobilis (strain ATCC 31821 / ZM4 / CP4).